Here is a 131-residue protein sequence, read N- to C-terminus: D-ribose pyranase (131 aa).

H20 (proton donor) is an active-site residue. Substrate-binding positions include D28, H98, and 120–122 (YSN).

Belongs to the RbsD / FucU family. RbsD subfamily. In terms of assembly, homodecamer.

Its subcellular location is the cytoplasm. It carries out the reaction beta-D-ribopyranose = beta-D-ribofuranose. It participates in carbohydrate metabolism; D-ribose degradation; D-ribose 5-phosphate from beta-D-ribopyranose: step 1/2. Functionally, catalyzes the interconversion of beta-pyran and beta-furan forms of D-ribose. The chain is D-ribose pyranase from Lactobacillus johnsonii (strain CNCM I-12250 / La1 / NCC 533).